We begin with the raw amino-acid sequence, 75 residues long: DNA-directed RNA polymerase subunit omega (75 aa).

This sequence belongs to the RNA polymerase subunit omega family. As to quaternary structure, the RNAP catalytic core consists of 2 alpha, 1 beta, 1 beta' and 1 omega subunit. When a sigma factor is associated with the core the holoenzyme is formed, which can initiate transcription.

It catalyses the reaction RNA(n) + a ribonucleoside 5'-triphosphate = RNA(n+1) + diphosphate. Functionally, promotes RNA polymerase assembly. Latches the N- and C-terminal regions of the beta' subunit thereby facilitating its interaction with the beta and alpha subunits. The chain is DNA-directed RNA polymerase subunit omega from Thermosipho melanesiensis (strain DSM 12029 / CIP 104789 / BI429).